The primary structure comprises 82 residues: Large ribosomal subunit protein bL31B (82 aa).

The protein belongs to the bacterial ribosomal protein bL31 family. Type B subfamily. In terms of assembly, part of the 50S ribosomal subunit.

In Bacillus velezensis (strain DSM 23117 / BGSC 10A6 / LMG 26770 / FZB42) (Bacillus amyloliquefaciens subsp. plantarum), this protein is Large ribosomal subunit protein bL31B.